We begin with the raw amino-acid sequence, 357 residues long: CRISPR system Cms protein Csm5 (357 aa).

Belongs to the CRISPR-associated Csm5 family. As to quaternary structure, part of the Csm effector complex that includes at least Cas10(1), Csm2(3), Csm3(5), Csm4(1), Csm5(1) and mature crRNA. The Csm complex is elongated and slightly twisted with a maximal length of 215 Angstroms and a diameter of 75-80 Angstroms. It has been modeled to have a central protein filamant of Csm3 subunits along which the dsRNA helix of paired crRNA and target RNA binds. The filament is capped at one end by Cas10 and Csm4 and at the other end by Csm5; ssDNA is thought to bind to the N-terminal HD domain of Cas10. Csm with a precursor crRNA does not include Csm5, while Cas6, the enzyme probably involved in pre-crRNA processing, is found associated with a subset of the Csm complex.

Its function is as follows. CRISPR (clustered regularly interspaced short palindromic repeat) is an adaptive immune system that provides protection against mobile genetic elements (viruses, transposable elements and conjugative plasmids). CRISPR clusters contain spacers, sequences complementary to antecedent mobile elements, and target invading nucleic acids. CRISPR clusters are transcribed and processed into CRISPR RNA (crRNA). The type III-A Csm effector complex binds crRNA and acts as a crRNA-guided RNase, DNase and cyclic oligoadenylate synthase; binding of target RNA cognate to the crRNA is required for all activities. In a heterologous host this Csm effector complex restricts ssRNA phage MS2, suggesting it may target RNA viruses in vivo. In terms of biological role, csm functions as a non-specific ssDNase. Base-pairing between crRNA and target RNA to form a ternary Csm complex activates a ssDNase activity; target RNA cleavage suppresses the ssDNase, a temporal control that prevents uncontrolled DNA degradation. Viral RNA transcripts probably tether the Csm complex to the viral genome, recruiting Cas10 ssDNA activity which is able to degrade DNA in the transcription bubble, spatially controlling the DNase activity. Functionally, this subunit might be involved in maturation of a crRNA intermediate to its mature form. This chain is CRISPR system Cms protein Csm5, found in Streptococcus thermophilus.